A 258-amino-acid polypeptide reads, in one-letter code: Global transcriptional regulator CodY (258 aa).

The segment at 1–156 is GAF domain; the sequence is MSSLLSKTRR…SATIVGMEML (156 aa). Positions 204–223 form a DNA-binding region, H-T-H motif; that stretch reads ASKIADKVGITRSVIVNALR.

The protein belongs to the CodY family.

The protein localises to the cytoplasm. In terms of biological role, DNA-binding global transcriptional regulator which is involved in the adaptive response to starvation and acts by directly or indirectly controlling the expression of numerous genes in response to nutrient availability. During rapid exponential growth, CodY is highly active and represses genes whose products allow adaptation to nutrient depletion. The chain is Global transcriptional regulator CodY from Clostridium botulinum (strain Eklund 17B / Type B).